A 278-amino-acid chain; its full sequence is Thioredoxin-related transmembrane protein 1 (278 aa).

A signal peptide spans 1-26 (MAHLGRLMVPLAALVLLLWAVPGAHG). Residues 27–132 (RRNNVRVLTD…FINFVSDKEW (106 aa)) form the Thioredoxin domain. Residues 27–181 (RRNNVRVLTD…DLGIPAWGSY (155 aa)) lie on the Extracellular side of the membrane. Catalysis depends on nucleophile residues Cys-56 and Cys-59. A disulfide bond links Cys-56 and Cys-59. Residues 182–202 (LVFAFATVLSGLLLGLCMIFV) form a helical membrane-spanning segment. Topologically, residues 203 to 278 (ADCLCPSKRR…VGLPSATDTS (76 aa)) are cytoplasmic. 2 S-palmitoyl cysteine lipidation sites follow: Cys-205 and Cys-207. Polar residues predominate over residues 217–226 (QYAKKTSPEF). The disordered stretch occupies residues 217–278 (QYAKKTSPEF…VGLPSATDTS (62 aa)). Residues 235 to 251 (EEQEADEEDVSEEEAED) show a composition bias toward acidic residues. 2 positions are modified to phosphoserine: Ser-245 and Ser-278.

Interacts with ATP2A2. Post-translationally, palmitoylated; palmitoylation is required for localization to mitochondria-associated endoplasmic reticulum membrane (MAM).

The protein localises to the endoplasmic reticulum membrane. The protein resides in the mitochondrion membrane. It localises to the secreted. It catalyses the reaction Catalyzes the rearrangement of -S-S- bonds in proteins.. Functionally, thiredoxin domain-containing protein that participates in various redox reactions through the reversible oxidation of its active center dithiol to a disulfide and catalyze dithiol-disulfide exchange reactions. Acts as a key inhibitor of the alternative triglyceride biosynthesis pathway by inhibiting the activity of TMEM68/DIESL at the endoplasmic reticulum, thereby restricting accumulation of triacylglycerol. The alternative triglyceride biosynthesis pathway mediates formation of triacylglycerol from diacylglycerol and membrane phospholipids. Acts as a protein disulfide isomerase by catalyzing formation or reduction of disulfide bonds. Specifically mediates formation of disulfide bonds of transmembrane proteins at the endoplasmic reticulum membrane. Involved in ER-associated degradation (ERAD) via its protein disulfide isomerase activity by acting on folding-defective polypeptides at the endoplasmic reticulum membrane. Acts as a negative regulator of platelet aggregation following secretion in the extracellular space. Acts as a regulator of endoplasmic reticulum-mitochondria contact sites via its ability to regulate redox signals. Regulates endoplasmic reticulum-mitochondria Ca(2+) flux. This chain is Thioredoxin-related transmembrane protein 1, found in Mus musculus (Mouse).